The following is a 396-amino-acid chain: Subtilisin-like protease 5 (396 aa).

A signal peptide spans 1 to 20; the sequence is MTGFFTILSFSLAALSVTNA. A propeptide spanning residues 21–116 is cleaved from the precursor; the sequence is AQILSVPKGA…VEPDAIISQH (96 aa). In terms of domain architecture, Inhibitor I9 spans 37–113; it reads YIVVMKDDTS…VAFVEPDAII (77 aa). The region spanning 125-396 is the Peptidase S8 domain; it reads PWGLSRLSNR…SRLLYNGSGR (272 aa). Catalysis depends on charge relay system residues Asp156 and His187. Asn230 and Asn248 each carry an N-linked (GlcNAc...) asparagine glycan. Ser342 functions as the Charge relay system in the catalytic mechanism. The span at 376–389 shows a compositional bias: polar residues; the sequence is PTIRNPGPDTTSRL. The disordered stretch occupies residues 376–396; sequence PTIRNPGPDTTSRLLYNGSGR. Asn392 is a glycosylation site (N-linked (GlcNAc...) asparagine).

It belongs to the peptidase S8 family.

The protein localises to the secreted. Secreted subtilisin-like serine protease with keratinolytic activity that contributes to pathogenicity. This chain is Subtilisin-like protease 5 (SUB5), found in Arthroderma benhamiae (strain ATCC MYA-4681 / CBS 112371) (Trichophyton mentagrophytes).